A 524-amino-acid polypeptide reads, in one-letter code: L-lactate permease (524 aa).

Helical transmembrane passes span 12 to 34 (LAVS…TVFK), 38 to 60 (IQAA…HLPF), 67 to 89 (IVQG…VWLY), 127 to 149 (LEGA…SLGF), 156 to 178 (MLCL…VGII), 193 to 215 (SMMT…IWLM), 224 to 246 (ILPA…TIFI), 250 to 267 (LADI…ALFL), 297 to 319 (WSPF…KGLL), 339 to 361 (IEVG…VTTV), 374 to 396 (SLLK…IIGI), 411 to 433 (EAVA…IGVF), and 505 to 522 (YSFG…ILSL).

It belongs to the lactate permease family.

The protein localises to the cell membrane. May play a role in L-lactate transport. The polypeptide is L-lactate permease (lctP) (Halalkalibacterium halodurans (strain ATCC BAA-125 / DSM 18197 / FERM 7344 / JCM 9153 / C-125) (Bacillus halodurans)).